The sequence spans 488 residues: Proline--tRNA ligase (488 aa).

It belongs to the class-II aminoacyl-tRNA synthetase family. ProS type 3 subfamily. As to quaternary structure, homodimer.

The protein localises to the cytoplasm. The enzyme catalyses tRNA(Pro) + L-proline + ATP = L-prolyl-tRNA(Pro) + AMP + diphosphate. Functionally, catalyzes the attachment of proline to tRNA(Pro) in a two-step reaction: proline is first activated by ATP to form Pro-AMP and then transferred to the acceptor end of tRNA(Pro). The chain is Proline--tRNA ligase from Borreliella burgdorferi (strain ZS7) (Borrelia burgdorferi).